A 69-amino-acid polypeptide reads, in one-letter code: Brevinin-1Pb (69 aa).

The signal sequence occupies residues 1–20 (MFTLNKFLLLLFFLGTINLS). Positions 21–43 (FCEEENAEEERIDEPDETDVEVE) are excised as a propeptide. Cysteine 63 and cysteine 69 form a disulfide bridge.

As to expression, expressed by the skin glands.

It is found in the secreted. Antibacterial activity against Gram-positive bacterium S.aureus and Gram-negative bacterium E.coli. Has activity against C.albicans. This is Brevinin-1Pb from Lithobates pipiens (Northern leopard frog).